We begin with the raw amino-acid sequence, 1086 residues long: MDFSEASTSGDRVNGFAKPFPPKPREGAPPPAPPLAPGASTSQAPPPLQPPPVIESAEKFYVPGVEEKSKFRILSQQVEISNLNISTRSFNVRTEIVLLPCEKSLYQLDLHIGKCSLLPNEVPGSASKVTLNGVECEYSRRDFWKDLAQEKSISSLEPVLYEKLAENDYELQILIPKEVRKKIKHRKAVRLRVDTVVRDPPRGLQFVDFNEHDCHVFTYHTPHISGAREWTVCLDEPDQLALWELTFELEPHLVPVASGELEEKREVSENGKIRYKFHQTVPTSACNIGWAIGRFKLEPHPESPTIYTFSLPGLEPFVNHTTMYLDKMVEFLEEKLSCRFPYPTLKVVFVDQCTEEIQVYSSLLIVPTAMLYHKKIIDVVQEARQKLIFSIALQFFGCLISPAQWWHWWIPVSIARFLTSLYVETKLGTAEARWQLKRAMDDVCDYEHQWGKIVLSPPEPTKKLPLHVDPRHEYTASPLYVEAMLKKGFLTMRMLQRRIGLEPFMRVLHRVLTVGLDMSEKKTTPAAWRHLLTTTESFFRSVISVTGKEIPSFLSQFVRTGGHAAFAVKFDFNRKRNIVEIEIKQDDTEGNGRTQYTGPLSVVVQEVDGAFTHTIQIDGAVSHAEISCHSKGRKQRKKKVPLLTGEEIEIDLTNMDAESPILWLRIDPDYLLIREITISQPMFHWEYMLRYERDVIAQMEALERIQALPSAHSRSVIVDAVANEKFFYRIRYRAAFVLTFVQNRKSEALTVGTPVLINMFRESFGSKAATNIPRSNNFVVTAQNLQQYFVMQALPQAIARLRRQSGECHEDVQPFLLDLIKFNDNSTNRYSDDFYRAALYNSLASSVFPHDALPCHVELPENLSNDVRVLIKEFTYALNMDTVSPSWGRVVGAAALTGLYQLQKCGYLPLDSQLLWTFSHPNCCVQMRRCAITLIIDRIVNDPHAADTRMLDLSRILELAELEQDPSIRRMIPRLLAQTPPTIFGSENAANTAETAERLWKLCTNSSIDSCIRSGFLDVYYSLYALGAPPALGGPEESVGIHRAYVTVPNAASTFATSQWHNSGYEAARRSPPRRDFGDETMNLMQ.

Over residues 1-11 (MDFSEASTSGD) the composition is skewed to polar residues. 2 disordered regions span residues 1 to 53 (MDFS…PPPV) and 1064 to 1086 (GYEAARRSPPRRDFGDETMNLMQ). Composition is skewed to pro residues over residues 19 to 36 (PFPPKPREGAPPPAPPLA) and 44 to 53 (APPPLQPPPV). Over residues 1067–1078 (AARRSPPRRDFG) the composition is skewed to basic and acidic residues.

Belongs to the TAF2 family. In terms of assembly, component of the TFIID basal transcription factor complex, composed of TATA-box-binding protein tbp-1, and a number of TBP-associated factors (TAFs).

The protein localises to the nucleus. Its function is as follows. The TFIID basal transcription factor complex plays a major role in the initiation of RNA polymerase II (Pol II)-dependent transcription. TFIID recognizes and binds promoters via its subunit tbp-1, a TATA-box-binding protein, and promotes assembly of the pre-initiation complex (PIC). The TFIID complex consists of tbp-1 and TBP-associated factors (TAFs), including taf-2. May regulate RNA polymerase II activity and thereby may control transcription initiation by RNA polymerase II. The chain is Transcription initiation factor TFIID subunit 2 from Caenorhabditis elegans.